Reading from the N-terminus, the 192-residue chain is Adenylate kinase (192 aa).

An ATP-binding site is contributed by 10 to 18; that stretch reads GVPGVGSTT.

This sequence belongs to the archaeal adenylate kinase family. Monomer.

Its subcellular location is the cytoplasm. It catalyses the reaction AMP + ATP = 2 ADP. This Methanocaldococcus jannaschii (strain ATCC 43067 / DSM 2661 / JAL-1 / JCM 10045 / NBRC 100440) (Methanococcus jannaschii) protein is Adenylate kinase (adkA).